Consider the following 392-residue polypeptide: Antitrypsin (392 aa).

A signal peptide spans 1-16 (MKTIICLFTIAIAAMA).

Belongs to the serpin family. Hemolymph.

The protein localises to the secreted. Functionally, may play a role in the prophenoloxidase activating system in the silkworm hemolymph. This Bombyx mori (Silk moth) protein is Antitrypsin.